The following is a 233-amino-acid chain: Lactate utilization protein C (233 aa).

Belongs to the LutC/YkgG family.

In terms of biological role, is involved in L-lactate degradation and allows cells to grow with lactate as the sole carbon source. This is Lactate utilization protein C from Oceanobacillus iheyensis (strain DSM 14371 / CIP 107618 / JCM 11309 / KCTC 3954 / HTE831).